Consider the following 290-residue polypeptide: Phosphate import ATP-binding protein PstB (290 aa).

Residues 43 to 285 (MSVRNLNVYY…PEHELTEAYI (243 aa)) enclose the ABC transporter domain. 75–82 (GPSGCGKS) contributes to the ATP binding site.

The protein belongs to the ABC transporter superfamily. Phosphate importer (TC 3.A.1.7) family. As to quaternary structure, the complex is composed of two ATP-binding proteins (PstB), two transmembrane proteins (PstC and PstA) and a solute-binding protein (PstS).

It is found in the cell inner membrane. It carries out the reaction phosphate(out) + ATP + H2O = ADP + 2 phosphate(in) + H(+). Functionally, part of the ABC transporter complex PstSACB involved in phosphate import. Responsible for energy coupling to the transport system. This is Phosphate import ATP-binding protein PstB from Pseudoalteromonas atlantica (strain T6c / ATCC BAA-1087).